We begin with the raw amino-acid sequence, 144 residues long: Maximins 3/H14 (144 aa).

A signal peptide spans 1–18; that stretch reads MNFKYIVAVSFLIASAYA. Propeptides lie at residues 19-43 and 73-122; these read RSVQ…REIR and RTAE…KKEK. Position 143 is an isoleucine amide (Ile-143).

It belongs to the bombinin family. Expressed by the skin glands.

The protein resides in the secreted. Functionally, maximin-3 shows antibacterial activity against both Gram-positive and Gram-negative bacteria. It also shows antimicrobial activity against the fungus C.albicans, but not against A.flavus nor P.uticale. It has little hemolytic activity. It possess a significant cytotoxicity against tumor cell lines. It possess a significant anti-HIV activity. It shows high spermicidal activity. Its function is as follows. Maximin-H14 shows antimicrobial activity against bacteria and against the fungus C.albicans. Shows strong hemolytic activity. The sequence is that of Maximins 3/H14 from Bombina maxima (Giant fire-bellied toad).